A 396-amino-acid chain; its full sequence is Elongation factor Tu (396 aa).

The tr-type G domain occupies 11–205 (KPHVNIGTIG…VIDDYIPTPK (195 aa)). Residues 20–27 (GHVDHGKT) are G1. Position 20 to 27 (20 to 27 (GHVDHGKT)) interacts with GTP. Thr27 lines the Mg(2+) pocket. The G2 stretch occupies residues 61 to 65 (GITIN). Residues 82-85 (DAPG) form a G3 region. GTP is bound by residues 82–86 (DAPGH) and 137–140 (NKTD). A G4 region spans residues 137-140 (NKTD). Positions 175 to 177 (SAL) are G5.

This sequence belongs to the TRAFAC class translation factor GTPase superfamily. Classic translation factor GTPase family. EF-Tu/EF-1A subfamily. Monomer.

The protein localises to the cytoplasm. It carries out the reaction GTP + H2O = GDP + phosphate + H(+). Its function is as follows. GTP hydrolase that promotes the GTP-dependent binding of aminoacyl-tRNA to the A-site of ribosomes during protein biosynthesis. The sequence is that of Elongation factor Tu from Limosilactobacillus reuteri (strain DSM 20016) (Lactobacillus reuteri).